The chain runs to 260 residues: ProSAAS (260 aa).

The N-terminal stretch at 1-33 is a signal peptide; sequence MAGSPLLCGPRAGGVGLLVLLLLGLLRLPPTLS. Residues 34–215 are proSAAS(1-180); the sequence is ARPVKEPRSL…SSEPEAAPAP (182 aa). Disordered stretches follow at residues 162–187 and 206–234; these read AALRPRPPVYDDGPTGPDVEDAADET and SSEPEAAPAPRRLRRAVDQDLGPEVPPEN. Residues 221-260 are C-terminal inhibitory domain; interacts with PCSK1; sequence AVDQDLGPEVPPENVLGALLRVKRLENSSPQAPARRLLPP. Residues 239-244 carry the Sufficient for inhibition of PCSK1 motif; the sequence is LLRVKR.

In terms of assembly, interacts via the C-terminal inhibitory domain with PCSK1 65 kDa form. Post-translationally, proteolytically cleaved in the Golgi. Big SAAS, Little SAAS, PEN and Big LEN are the major processed peptides in proSAAS-overexpressing PC-12 phaeochromocytoma cells (lacking PCSK1 and PCSK2 endopeptidases). Peptides corresponding to PEN and a proSAAS aa 40-59 have been detected in wild-type PC-12 cells. In terms of tissue distribution, expressed in adult brain (all major structural regions), adrenal gland (medulla) and spinal cord (dorsal and ventral horn). Expressed in pancreatic islands.

The protein localises to the secreted. It is found in the golgi apparatus. Its subcellular location is the trans-Golgi network. May function in the control of the neuroendocrine secretory pathway. Proposed be a specific endogenous inhibitor of PCSK1. ProSAAS and Big PEN-LEN, both containing the C-terminal inhibitory domain, but not the processed peptides reduce PCSK1 activity in the endoplasmic reticulum and Golgi. It reduces the activity of the 87 kDa form but not the autocatalytically derived 65 kDa form of PCSK1. Subsequent processing of proSAAS may eliminate the inhibition. Slows down convertase-mediated processing of proopiomelanocortin and proenkephalin. May control the intracellular timing of PCSK1 rather than its total level of activity. Functionally, endogenous ligand for GPR171. Neuropeptide involved in the regulation of feeding. This Rattus norvegicus (Rat) protein is ProSAAS (Pcsk1n).